The chain runs to 210 residues: MASMGLQVMGIALAVLGWLGAILSCALPMWRVTAFIGSNIVTSQTIWEGLWMNCVVQSTGQMQCKVYDSLLALPQDLQAARALMVVSIILAALGVLLSVVGGKCTNCVEDESAKAKTMIVAGVVFLLAGLLVMVPASWTANNIIRDFYNPLVVSGQKREMGASLYVGWAASGLLLLGGALLCCNCPPRADKPYSAKYSAAARSAPASNYV.

The Cytoplasmic portion of the chain corresponds to 1 to 7 (MASMGLQ). Residues 1–103 (MASMGLQVMG…GVLLSVVGGK (103 aa)) are interaction with EPHA2. The chain crosses the membrane as a helical span at residues 8–28 (VMGIALAVLGWLGAILSCALP). Topologically, residues 29–81 (MWRVTAFIGSNIVTSQTIWEGLWMNCVVQSTGQMQCKVYDSLLALPQDLQAAR) are extracellular. An intrachain disulfide couples C54 to C64. The chain crosses the membrane as a helical span at residues 82-102 (ALMVVSIILAALGVLLSVVGG). The Cytoplasmic portion of the chain corresponds to 103 to 117 (KCTNCVEDESAKAKT). Residues 118 to 138 (MIVAGVVFLLAGLLVMVPASW) traverse the membrane as a helical segment. Residues 139–160 (TANNIIRDFYNPLVVSGQKREM) are Extracellular-facing. A helical membrane pass occupies residues 161–181 (GASLYVGWAASGLLLLGGALL). Topologically, residues 182–210 (CCNCPPRADKPYSAKYSAAARSAPASNYV) are cytoplasmic. Y209 carries the phosphotyrosine modification. Residues 209–210 (YV) are interactions with TJP1, TJP2 and TJP3.

Belongs to the claudin family. In terms of assembly, can form heteropolymeric strands with other claudins. Interacts with CLDN8. Interacts with CLDN1. Directly interacts with TJP1/ZO-1. Interacts with TJP2/ZO-2 and TJP3/ZO-3. Interacts with EPHA2; phosphorylates CLDN4 and may regulate tight junctions. Phosphorylated. Phosphorylation by EPHA2 is stimulated by EFNA1 and alters interaction with TJP1.

Its subcellular location is the cell junction. The protein localises to the tight junction. The protein resides in the cell membrane. It carries out the reaction chloride(in) = chloride(out). The enzyme catalyses bromide(in) = bromide(out). It catalyses the reaction iodide(out) = iodide(in). The catalysed reaction is fluoride(in) = fluoride(out). Can associate with other claudins to regulate tight junction structural and functional strand dynamics. May coassemble with CLDN8 into tight junction strands containing anion-selective channels that convey paracellular chloride permeability in renal collecting ducts. May integrate into CLDN3 strands to modulate localized tight junction barrier properties. May disrupt strand assembly of channel-forming CLDN2 and CLDN15 and inhibit cation conductance. Cannot form tight junction strands on its own. This chain is Claudin-4 (CLDN4), found in Canis lupus familiaris (Dog).